Here is a 491-residue protein sequence, read N- to C-terminus: Glutamyl-tRNA(Gln) amidotransferase subunit A (491 aa).

Catalysis depends on charge relay system residues Lys-78 and Ser-158. The active-site Acyl-ester intermediate is Ser-182.

This sequence belongs to the amidase family. GatA subfamily. Heterotrimer of A, B and C subunits.

The enzyme catalyses L-glutamyl-tRNA(Gln) + L-glutamine + ATP + H2O = L-glutaminyl-tRNA(Gln) + L-glutamate + ADP + phosphate + H(+). In terms of biological role, allows the formation of correctly charged Gln-tRNA(Gln) through the transamidation of misacylated Glu-tRNA(Gln) in organisms which lack glutaminyl-tRNA synthetase. The reaction takes place in the presence of glutamine and ATP through an activated gamma-phospho-Glu-tRNA(Gln). The polypeptide is Glutamyl-tRNA(Gln) amidotransferase subunit A (Afipia carboxidovorans (strain ATCC 49405 / DSM 1227 / KCTC 32145 / OM5) (Oligotropha carboxidovorans)).